The sequence spans 389 residues: Lipid-A-disaccharide synthase (389 aa).

The protein belongs to the LpxB family.

The enzyme catalyses a lipid X + a UDP-2-N,3-O-bis[(3R)-3-hydroxyacyl]-alpha-D-glucosamine = a lipid A disaccharide + UDP + H(+). It participates in bacterial outer membrane biogenesis; LPS lipid A biosynthesis. Condensation of UDP-2,3-diacylglucosamine and 2,3-diacylglucosamine-1-phosphate to form lipid A disaccharide, a precursor of lipid A, a phosphorylated glycolipid that anchors the lipopolysaccharide to the outer membrane of the cell. This Burkholderia ambifaria (strain ATCC BAA-244 / DSM 16087 / CCUG 44356 / LMG 19182 / AMMD) (Burkholderia cepacia (strain AMMD)) protein is Lipid-A-disaccharide synthase.